Reading from the N-terminus, the 205-residue chain is Octanoyltransferase (205 aa).

The region spanning N30–F205 is the BPL/LPL catalytic domain. Residues R68–H75, A140–G142, and G153–A155 contribute to the substrate site. The active-site Acyl-thioester intermediate is the C171.

It belongs to the LipB family.

The protein localises to the cytoplasm. The catalysed reaction is octanoyl-[ACP] + L-lysyl-[protein] = N(6)-octanoyl-L-lysyl-[protein] + holo-[ACP] + H(+). The protein operates within protein modification; protein lipoylation via endogenous pathway; protein N(6)-(lipoyl)lysine from octanoyl-[acyl-carrier-protein]: step 1/2. Functionally, catalyzes the transfer of endogenously produced octanoic acid from octanoyl-acyl-carrier-protein onto the lipoyl domains of lipoate-dependent enzymes. Lipoyl-ACP can also act as a substrate although octanoyl-ACP is likely to be the physiological substrate. This Wolbachia sp. subsp. Brugia malayi (strain TRS) protein is Octanoyltransferase.